Consider the following 996-residue polypeptide: Leucine-rich repeat receptor-like kinase protein THICK TASSEL DWARF1 (996 aa).

The first 26 residues, 1–26 (MPPPTFLLGLLLLLLLAAAAPAPASA), serve as a signal peptide directing secretion. LRR repeat units follow at residues 78-103 (TSRV…VALL), 104-127 (DALA…LASM), 128-151 (PALR…PPAA), 153-178 (FPAL…APHA), 180-201 (SLRY…TFGD), 202-226 (LAAL…LSRL), 251-275 (LQSL…LARL), 276-299 (SRLD…LGAL), 300-323 (TSLR…FAAL), 325-349 (NLKL…DFPF), 351-371 (EVLQ…LGRN), 372-395 (GRLK…LCAG), 397-419 (NLQL…LGDC), 420-443 (KTLT…LFDL), 445-466 (QANM…VIAG), 467-490 (DKIG…IGNL), 491-514 (PALQ…IGRL), 516-538 (NLTR…LMGC), 539-562 (ASLG…VTSL), 563-586 (KILC…MANM), and 587-611 (TSLT…QFLV). The chain crosses the membrane as a helical span at residues 646 to 666 (KKLLVWLVVLLTLLVLAVLGA). In terms of domain architecture, Protein kinase spans 703-978 (LKEDNIIGKG…TMREVVHMLS (276 aa)). ATP contacts are provided by residues 709-717 (IGKGGAGIV) and Lys-731. The Proton acceptor role is filled by Asp-828.

Belongs to the protein kinase superfamily. Ser/Thr protein kinase family. In terms of tissue distribution, highly expressed in the apex of the vegetative seedlings. Lower expression in young leaves, ears and tassels, embryos and roots. Not expressed in the shoot meristem itself. Detected in the three outermost layers of the inflorescence meristem, and on its flanks at positions of prospective spikelet pair meristems. Not confined to meristematic cells but also detected in primordia of glumes, lemmas and stamens.

It localises to the membrane. It catalyses the reaction L-seryl-[protein] + ATP = O-phospho-L-seryl-[protein] + ADP + H(+). The catalysed reaction is L-threonyl-[protein] + ATP = O-phospho-L-threonyl-[protein] + ADP + H(+). In terms of biological role, receptor-like kinase protein that regulates meristem size during inflorescence and flower development. Promotes vegetative meristem growth and restricts inflorescence and floral meristem growth. Based on additive and synergistic phenotypes of double mutants, it is probable that unlike CLV1 and CLV2 in A.thaliana, TD1 and FAE2 do not function exclusively in a single pathway. However, KN-1 and TD1 do function in a linear pathway to maintain vegetative meristem homeostasis, but they may interact with different partners during development. The protein is Leucine-rich repeat receptor-like kinase protein THICK TASSEL DWARF1 (TD1) of Zea mays (Maize).